Reading from the N-terminus, the 893-residue chain is Phosphatidate phosphatase LPIN2 (893 aa).

The N-LIP stretch occupies residues 1–108; the sequence is MNYVGQLAGQ…LPAYLATSPI (108 aa). Serine 106 is modified (phosphoserine). Positions 122–216 are disordered; that stretch reads LVKSSGNERP…EDYKEPSLFH (95 aa). Polar residues predominate over residues 123 to 151; that stretch reads VKSSGNERPAQSSDVSHTLESEAVFTQSS. Over residues 152–162 the composition is skewed to basic residues; that stretch reads VKKKKRRRKKC. The Nuclear localization signal motif lies at 153–158; it reads KKKKRR. Residues serine 174, serine 186, and serine 187 each carry the phosphoserine modification. Positions 204–213 are enriched in basic and acidic residues; the sequence is LKEEDYKEPS. Phosphoserine is present on residues serine 243 and serine 303. Disordered stretches follow at residues 357-400 and 417-456; these read LLDA…PDDI and FPKS…TECL. A compositionally biased stretch (low complexity) spans 360–371; sequence ADPVPSPSAEAP. A compositionally biased stretch (basic residues) spans 384–393; sequence KKKGVHKRSQ. Polar residues predominate over residues 423 to 445; it reads DPGSRQWPESDTFSGSQSPQSVG. Phosphoserine is present on serine 563. The disordered stretch occupies residues 568–611; sequence LPETKEGKSEVPPANDLPSNAEEPTSARPAENDTSSDEGSQELE. A compositionally biased stretch (acidic residues) spans 601-611; it reads TSSDEGSQELE. The tract at residues 632 to 834 is C-LIP; that stretch reads YKKSLRLSSD…RIFTVNPKGE (203 aa). The short motif at 686 to 690 is the DXDXT motif element; it reads DIDGT. The LXXIL motif signature appears at 697-701; sequence LGQIL.

The protein belongs to the lipin family. Mg(2+) is required as a cofactor. As to expression, expressed at high level in liver and to some extend in lung, kidney, placenta, spleen, thymus, lymph node, prostate, testes, small intestine, and colon. Expressed also in circulating red blood cells and site of lymphopoiesis.

The protein resides in the nucleus. Its subcellular location is the cytoplasm. It is found in the cytosol. The protein localises to the endoplasmic reticulum membrane. The enzyme catalyses a 1,2-diacyl-sn-glycero-3-phosphate + H2O = a 1,2-diacyl-sn-glycerol + phosphate. Inhibited by N-ethylmaleimide. Acts as a magnesium-dependent phosphatidate phosphatase enzyme which catalyzes the conversion of phosphatidic acid to diacylglycerol during triglyceride, phosphatidylcholine and phosphatidylethanolamine biosynthesis in the endoplasmic reticulum membrane. Plays important roles in controlling the metabolism of fatty acids at different levels. Also acts as a nuclear transcriptional coactivator for PPARGC1A to modulate lipid metabolism. The polypeptide is Phosphatidate phosphatase LPIN2 (Mus musculus (Mouse)).